Reading from the N-terminus, the 347-residue chain is Selenide, water dikinase (347 aa).

Residue selenocysteine 17 is part of the active site. Selenocysteine 17 is a non-standard amino acid (selenocysteine). ATP-binding positions include lysine 20 and 48–50; that span reads TAD. A Mg(2+)-binding site is contributed by aspartate 51. Residues aspartate 68, aspartate 91, and 139–141 contribute to the ATP site; that span reads GHS. Aspartate 91 lines the Mg(2+) pocket. Aspartate 227 provides a ligand contact to Mg(2+).

This sequence belongs to the selenophosphate synthase 1 family. Class I subfamily. Homodimer. Requires Mg(2+) as cofactor.

The enzyme catalyses hydrogenselenide + ATP + H2O = selenophosphate + AMP + phosphate + 2 H(+). Its function is as follows. Synthesizes selenophosphate from selenide and ATP. The chain is Selenide, water dikinase from Haemophilus influenzae (strain 86-028NP).